We begin with the raw amino-acid sequence, 1208 residues long: Chromosome partition protein Smc (1208 aa).

Residue proline 32–asparagine 39 coordinates ATP. Coiled-coil stretches lie at residues valine 170–isoleucine 205, glutamate 239–glutamine 504, and valine 694–aspartate 1054.

It belongs to the SMC family. As to quaternary structure, homodimer.

The protein localises to the cytoplasm. Its function is as follows. Required for chromosome condensation and partitioning. The sequence is that of Chromosome partition protein Smc from Thauera aminoaromatica.